Here is a 249-residue protein sequence, read N- to C-terminus: ATP synthase subunit a (249 aa).

Transmembrane regions (helical) follow at residues Gly33–Ala53, Leu92–Ile112, Ile131–Ser151, Leu196–Leu216, and Gly217–His237.

This sequence belongs to the ATPase A chain family. F-type ATPases have 2 components, CF(1) - the catalytic core - and CF(0) - the membrane proton channel. CF(1) has five subunits: alpha(3), beta(3), gamma(1), delta(1), epsilon(1). CF(0) has four main subunits: a, b, b' and c.

It is found in the cellular thylakoid membrane. Its function is as follows. Key component of the proton channel; it plays a direct role in the translocation of protons across the membrane. The polypeptide is ATP synthase subunit a (Microcystis aeruginosa (strain NIES-843 / IAM M-2473)).